The sequence spans 496 residues: Probable cytosol aminopeptidase (496 aa).

Mn(2+)-binding residues include Lys262 and Asp267. Lys274 is a catalytic residue. 3 residues coordinate Mn(2+): Asp285, Asp344, and Glu346. Residue Arg348 is part of the active site.

Belongs to the peptidase M17 family. Requires Mn(2+) as cofactor.

The protein localises to the cytoplasm. The enzyme catalyses Release of an N-terminal amino acid, Xaa-|-Yaa-, in which Xaa is preferably Leu, but may be other amino acids including Pro although not Arg or Lys, and Yaa may be Pro. Amino acid amides and methyl esters are also readily hydrolyzed, but rates on arylamides are exceedingly low.. It catalyses the reaction Release of an N-terminal amino acid, preferentially leucine, but not glutamic or aspartic acids.. Presumably involved in the processing and regular turnover of intracellular proteins. Catalyzes the removal of unsubstituted N-terminal amino acids from various peptides. The sequence is that of Probable cytosol aminopeptidase from Rhizobium etli (strain CIAT 652).